Consider the following 129-residue polypeptide: uncharacterized protein (129 aa).

This is an uncharacterized protein from Invertebrate iridescent virus 6 (IIV-6).